The sequence spans 394 residues: Venom metalloproteinase antarease TserMP_A (394 aa).

The N-terminal stretch at 1-16 (MISYLASIFLLATVSA) is a signal peptide. Positions 17–157 (VPSGRVEVVF…NAENVSRMAR (141 aa)) are excised as a propeptide. One can recognise a Peptidase M12B domain in the interval 162-391 (IVVEYYIVTD…PTASCIFQQC (230 aa)). Residues cysteine 295 and cysteine 386 are joined by a disulfide bond. A Zn(2+)-binding site is contributed by histidine 319. Glutamate 320 is an active-site residue. Zn(2+)-binding residues include histidine 323 and histidine 329.

Zn(2+) is required as a cofactor. Post-translationally, contains 4 disulfide bonds. As to expression, expressed by the venom gland.

Its subcellular location is the secreted. Inhibited by EDTA. Its function is as follows. Acts as a metalloprotease. Penetrates intact tissue and specifically cleaves the vesicle-associated membrane protein 2 (VAMP2) (part of the SNARE complex) involved in pancreatic secretion, thus disrupting the normal vesicular traffic. The polypeptide is Venom metalloproteinase antarease TserMP_A (Tityus serrulatus (Brazilian scorpion)).